The sequence spans 249 residues: Homeobox protein TGIF2LX (249 aa).

Disordered stretches follow at residues Met-1 to Pro-65 and Asp-126 to Lys-199. The segment covering Ala-9–Pro-27 has biased composition (basic and acidic residues). Polar residues predominate over residues Ala-28–Asp-46. The homeobox; TALE-type DNA-binding region spans Glu-55–Asp-118. Polar residues predominate over residues Asp-159–Gly-172.

This sequence belongs to the TALE/TGIF homeobox family.

Its subcellular location is the nucleus. Its function is as follows. May have a transcription role in testis. The polypeptide is Homeobox protein TGIF2LX (TGIF2LX) (Macaca mulatta (Rhesus macaque)).